A 698-amino-acid polypeptide reads, in one-letter code: Polyribonucleotide nucleotidyltransferase (698 aa).

Mg(2+)-binding residues include aspartate 490 and aspartate 496. In terms of domain architecture, KH spans 557 to 616 (PKVVTMTIKPDKIRDVIGPGGKKINEIIDETGVKLDIEQDGTIFIGAVDQAMINRAREII). In terms of domain architecture, S1 motif spans 626–694 (GQTYQATVKR…KQGRVNASHR (69 aa)).

The protein belongs to the polyribonucleotide nucleotidyltransferase family. Mg(2+) serves as cofactor.

The protein localises to the cytoplasm. The enzyme catalyses RNA(n+1) + phosphate = RNA(n) + a ribonucleoside 5'-diphosphate. In terms of biological role, involved in mRNA degradation. Catalyzes the phosphorolysis of single-stranded polyribonucleotides processively in the 3'- to 5'-direction. This chain is Polyribonucleotide nucleotidyltransferase, found in Staphylococcus aureus (strain MRSA252).